The primary structure comprises 165 residues: Coatomer subunit zeta (165 aa).

It belongs to the adaptor complexes small subunit family. Oligomeric complex that consists of at least the alpha, beta, beta', gamma, delta, epsilon and zeta subunits.

The protein localises to the cytoplasm. It is found in the golgi apparatus membrane. It localises to the cytoplasmic vesicle. The protein resides in the COPI-coated vesicle membrane. Functionally, the coatomer is a cytosolic protein complex that binds to dilysine motifs and reversibly associates with Golgi non-clathrin-coated vesicles, which further mediate biosynthetic protein transport from the ER, via the Golgi up to the trans Golgi network. Coatomer complex is required for budding from Golgi membranes, and is essential for the retrograde Golgi-to-ER transport of dilysine-tagged proteins. The zeta subunit may be involved in regulating the coat assembly and, hence, the rate of biosynthetic protein transport due to its association-dissociation properties with the coatomer complex. The protein is Coatomer subunit zeta of Encephalitozoon cuniculi (strain GB-M1) (Microsporidian parasite).